Here is a 1528-residue protein sequence, read N- to C-terminus: MALRSFCSADGSDPLWDWNVTWHTSNPDFTKCFQNTVLTWVPCFYLWSCFPLYFFYLSRHDRGYIQMTHLNKTKTALGFFLWIICWADLFYSFWERSQGVLRAPVLLVSPTLLGITMLLATFLIQLERRKGVQSSGIMLTFWLVALLCALAILRSKIISALKKDAHVDVFRDSTFYLYFTLVLVQLVLSCFSDCSPLFSETVHDRNPCPESSASFLSRITFWWITGMMVHGYRQPLESSDLWSLNKEDTSEEVVPVLVNNWKKECDKSRKQPVRIVYAPPKDPSKPKGSSQLDVNEEVEALIVKSPHKDREPSLFKVLYKTFGPYFLMSFLYKALHDLMMFAGPKILELIINFVNDREAPDWQGYFYTALLFVSACLQTLALHQYFHICFVSGMRIKTAVVGAVYRKALLITNAARKSSTVGEIVNLMSVDAQRFMDLATYINMIWSAPLQVILALYFLWLSLGPSVLAGVAVMILMVPLNAVMAMKTKTYQVAHMKSKDNRIKLMNEILNGIKVLKLYAWELAFQDKVMSIRQEELKVLKKSAYLAAVGTFTWVCTPFLVALSTFAVFVTVDERNILDAKKAFVSLALFNILRFPLNILPMVISSIVQASVSLKRLRIFLSHEELEPDSIERRSIKSGEGNSITVKNATFTWARGEPPTLNGITFSIPEGALVAVVGQVGCGKSSLLSALLAEMDKVEGHVTLKGSVAYVPQQAWIQNDSLRENILFGHPLQENYYKAVMEACALLPDLEILPSGDRTEIGEKGVNLSGGQKQRVSLARAVYSNSDIYLFDDPLSAVDAHVGKHIFEKVVGPMGLLKNKTRILVTHGISYLPQVDVIIVMSGGKISEMGSYQELLDRDGAFAEFLRTYANAEQDLASEDDSVSGSGKESKPVENGMLVTDTVGKHLQRHLSNSSSHSGDTSQQHSSIAELQKAGAKEETWKLMEADKAQTGQVQLSVYWNYMKAIGLFITFLSIFLFLCNHVSALASNYWLSLWTDDPPVVNGTQANRNFRLSVYGALGILQGAAIFGYSMAVSIGGIFASRRLHLDLLYNVLRSPMSFFERTPSGNLVNRFSKELDTVDSMIPQVIKMFMGSLFSVIGAVIIILLATPIAAVIIPPLGLVYFFVQRFYVASSRQLKRLESVSRSPVYSHFNETLLGVSVIRAFEEQERFIHQSDLKVDENQKAYYPSIVANRWLAVRLECVGNCIVLFAALFAVISRHSLSAGLVGLSVSYSLQITAYLNWLVRMSSEMETNIVAVERLKEYSETEKEAPWQIQETAPPSTWPHSGRVEFRDYCLRYREDLDLVLKHINVTIEGGEKVGIVGRTGAGKSSLTLGLFRINESAEGEIIIDGVNIAKIGLHNLRFKITIIPQDPVLFSGSLRMNLDPFSQYSDEEVWMALELAHLKGFVSALPDKLNHECAEGGENLSVGQRQLVCLARALLRKTKILVLDEATAAVDLETDNLIQSTIRTQFEDCTVLTIAHRLNTIMDYTRVIVLDKGEVRECGAPSELLQQRGIFYSMAKDAGLV.

The Extracellular segment spans residues 1–33; it reads MALRSFCSADGSDPLWDWNVTWHTSNPDFTKCF. N19 carries N-linked (GlcNAc...) asparagine glycosylation. The helical transmembrane segment at 34 to 54 threads the bilayer; sequence QNTVLTWVPCFYLWSCFPLYF. Residues 55 to 74 lie on the Cytoplasmic side of the membrane; the sequence is FYLSRHDRGYIQMTHLNKTK. A helical transmembrane segment spans residues 75-95; sequence TALGFFLWIICWADLFYSFWE. The Extracellular segment spans residues 96–100; that stretch reads RSQGV. A helical membrane pass occupies residues 101–121; the sequence is LRAPVLLVSPTLLGITMLLAT. At 122–133 the chain is on the cytoplasmic side; it reads FLIQLERRKGVQ. Residues 134–154 form a helical membrane-spanning segment; the sequence is SSGIMLTFWLVALLCALAILR. Residues 155–172 are Extracellular-facing; it reads SKIISALKKDAHVDVFRD. The helical transmembrane segment at 173 to 193 threads the bilayer; it reads STFYLYFTLVLVQLVLSCFSD. Residues 194–317 lie on the Cytoplasmic side of the membrane; sequence CSPLFSETVH…KDREPSLFKV (124 aa). The residue at position 277 (Y277) is a Phosphotyrosine. A Phosphoserine modification is found at S290. A helical transmembrane segment spans residues 318–338; sequence LYKTFGPYFLMSFLYKALHDL. One can recognise an ABC transmembrane type-1 1 domain in the interval 326-609; that stretch reads FLMSFLYKAL…LPMVISSIVQ (284 aa). The Extracellular segment spans residues 339–364; that stretch reads MMFAGPKILELIINFVNDREAPDWQG. The helical transmembrane segment at 365–385 threads the bilayer; it reads YFYTALLFVSACLQTLALHQY. Over 386–441 the chain is Cytoplasmic; that stretch reads FHICFVSGMRIKTAVVGAVYRKALLITNAARKSSTVGEIVNLMSVDAQRFMDLATY. Residues 442–462 traverse the membrane as a helical segment; it reads INMIWSAPLQVILALYFLWLS. At 463 to 465 the chain is on the extracellular side; the sequence is LGP. The chain crosses the membrane as a helical span at residues 466-486; the sequence is SVLAGVAVMILMVPLNAVMAM. Over 487-548 the chain is Cytoplasmic; the sequence is KTKTYQVAHM…VLKKSAYLAA (62 aa). K504 carries the post-translational modification N6-succinyllysine. The helical transmembrane segment at 549-569 threads the bilayer; that stretch reads VGTFTWVCTPFLVALSTFAVF. Residues 570–591 are Extracellular-facing; that stretch reads VTVDERNILDAKKAFVSLALFN. Residues 592-612 form a helical membrane-spanning segment; sequence ILRFPLNILPMVISSIVQASV. The Cytoplasmic segment spans residues 613–963; that stretch reads SLKRLRIFLS…VQLSVYWNYM (351 aa). The ABC transporter 1 domain occupies 644-868; it reads ITVKNATFTW…DGAFAEFLRT (225 aa). 678-685 contributes to the ATP binding site; sequence GQVGCGKS. 2 disordered regions span residues 876-895 and 909-929; these read LASEDDSVSGSGKESKPVEN and RHLSNSSSHSGDTSQQHSSIA. Phosphoserine occurs at positions 878, 882, 912, and 927. Over residues 910-929 the composition is skewed to polar residues; it reads HLSNSSSHSGDTSQQHSSIA. Residues 964–984 form a helical membrane-spanning segment; that stretch reads KAIGLFITFLSIFLFLCNHVS. The ABC transmembrane type-1 2 domain occupies 971 to 1253; sequence TFLSIFLFLC…LVRMSSEMET (283 aa). Over 985 to 1022 the chain is Extracellular; it reads ALASNYWLSLWTDDPPVVNGTQANRNFRLSVYGALGIL. N1003 is a glycosylation site (N-linked (GlcNAc...) asparagine). The chain crosses the membrane as a helical span at residues 1023–1043; sequence QGAAIFGYSMAVSIGGIFASR. Residues 1044 to 1086 are Cytoplasmic-facing; sequence RLHLDLLYNVLRSPMSFFERTPSGNLVNRFSKELDTVDSMIPQ. Residues 1087 to 1107 traverse the membrane as a helical segment; sequence VIKMFMGSLFSVIGAVIIILL. Position 1108 (A1108) is a topological domain, extracellular. A helical transmembrane segment spans residues 1109–1129; sequence TPIAAVIIPPLGLVYFFVQRF. Topologically, residues 1130 to 1200 are cytoplasmic; that stretch reads YVASSRQLKR…VANRWLAVRL (71 aa). Residues 1201-1221 traverse the membrane as a helical segment; it reads ECVGNCIVLFAALFAVISRHS. Over 1222–1223 the chain is Extracellular; that stretch reads LS. Residues 1224 to 1244 traverse the membrane as a helical segment; it reads AGLVGLSVSYSLQITAYLNWL. At 1245–1528 the chain is on the cytoplasmic side; the sequence is VRMSSEMETN…YSMAKDAGLV (284 aa). The region spanning 1290–1524 is the ABC transporter 2 domain; sequence VEFRDYCLRY…RGIFYSMAKD (235 aa). 1324–1331 contributes to the ATP binding site; that stretch reads GRTGAGKS.

It belongs to the ABC transporter superfamily. ABCC family. Conjugate transporter (TC 3.A.1.208) subfamily.

The protein localises to the cell membrane. It localises to the basolateral cell membrane. It catalyses the reaction ATP + H2O + xenobioticSide 1 = ADP + phosphate + xenobioticSide 2.. It carries out the reaction an S-substituted glutathione(in) + ATP + H2O = an S-substituted glutathione(out) + ADP + phosphate + H(+). The catalysed reaction is leukotriene C4(in) + ATP + H2O = leukotriene C4(out) + ADP + phosphate + H(+). The enzyme catalyses sphing-4-enine 1-phosphate(in) + ATP + H2O = sphing-4-enine 1-phosphate(out) + ADP + phosphate + H(+). It catalyses the reaction 17beta-estradiol 17-O-(beta-D-glucuronate)(in) + ATP + H2O = 17beta-estradiol 17-O-(beta-D-glucuronate)(out) + ADP + phosphate + H(+). It carries out the reaction vincristine(in) + ATP + H2O = vincristine(out) + ADP + phosphate + H(+). The catalysed reaction is daunorubicin(in) + ATP + H2O = daunorubicin(out) + ADP + phosphate + H(+). The enzyme catalyses 2',3'-cGAMP(in) + ATP + H2O = 2',3'-cGAMP(out) + ADP + phosphate + H(+). It catalyses the reaction S-[(2E,6E,10E)-geranylgeranyl]-L-glutathione(in) + ATP + H2O = S-[(2E,6E,10E)-geranylgeranyl]-L-glutathione(out) + ADP + phosphate + H(+). It carries out the reaction prostaglandin A2-S-(R)-glutathione(in) + ATP + H2O = prostaglandin A2-S-(R)-glutathione(out) + ADP + phosphate + H(+). The catalysed reaction is prostaglandin A2-S-(S)-glutathione(in) + ATP + H2O = prostaglandin A2-S-(S)-glutathione(out) + ADP + phosphate + H(+). With respect to regulation, MK 571 inhibits sphingosine 1-phosphate and leukotriene C4 export. Functionally, mediates export of organic anions and drugs from the cytoplasm. Mediates ATP-dependent transport of glutathione and glutathione conjugates, leukotriene C4, estradiol-17-beta-o-glucuronide, methotrexate, antiviral drugs and other xenobiotics. Confers resistance to anticancer drugs by decreasing accumulation of drugs in cells, and by mediating ATP- and GSH-dependent drug export. Hydrolyzes ATP with low efficiency. Catalyzes the export of sphingosine 1-phosphate from mast cells independently of their degranulation. Participates in inflammatory response by allowing export of leukotriene C4 from leukotriene C4-synthesizing cells. Mediates ATP-dependent, GSH-independent cyclic GMP-AMP (cGAMP) export. Thus, by limiting intracellular cGAMP concentrations negatively regulates the cGAS-STING pathway. Exports S-geranylgeranyl-glutathione (GGG) in lymphoid cells and stromal compartments of lymphoid organs. ABCC1 (via extracellular transport) with GGT5 (via GGG catabolism) establish GGG gradients within lymphoid tissues to position P2RY8-positive lymphocytes at germinal centers in lymphoid follicles and restrict their chemotactic transmigration from blood vessels to the bone marrow parenchyma. Mediates basolateral export of GSH-conjugated R- and S-prostaglandin A2 diastereomers in polarized epithelial cells. This is Multidrug resistance-associated protein 1 from Mus musculus (Mouse).